The sequence spans 430 residues: Bystin (430 aa).

Basic residues-rich tracts occupy residues 1–12 and 26–35; these read MGKDKKDRKHKG and PSKRVKHRRE. 2 disordered regions span residues 1-45 and 65-113; these read MGKD…ESFV and MEEY…SETY. A compositionally biased stretch (basic and acidic residues) spans 68-78; the sequence is YGFRKTGDRKT. A compositionally biased stretch (acidic residues) spans 93-104; it reads RIDDDDEDDSDD.

The protein belongs to the bystin family.

It localises to the nucleus. The protein resides in the nucleolus. In terms of biological role, required for processing of 20S pre-rRNA precursor and biogenesis of 40S ribosomal subunits. The sequence is that of Bystin (bysl) from Nematostella vectensis (Starlet sea anemone).